A 409-amino-acid chain; its full sequence is Putative lipoate-protein ligase A (409 aa).

The BPL/LPL catalytic domain maps to 146 to 330; sequence GPDNCRLLFY…RFQKTFKVDG (185 aa). Residues arginine 188, 193 to 196, and lysine 249 each bind ATP; that span reads GTVL. Lysine 249 is a binding site for (R)-lipoate.

It belongs to the LplA family. As to quaternary structure, monomer.

The enzyme catalyses L-lysyl-[lipoyl-carrier protein] + (R)-lipoate + ATP = N(6)-[(R)-lipoyl]-L-lysyl-[lipoyl-carrier protein] + AMP + diphosphate + H(+). It functions in the pathway protein modification; protein lipoylation via exogenous pathway; protein N(6)-(lipoyl)lysine from lipoate: step 1/2. The protein operates within protein modification; protein lipoylation via exogenous pathway; protein N(6)-(lipoyl)lysine from lipoate: step 2/2. Functionally, catalyzes both the ATP-dependent activation of exogenously supplied lipoate to lipoyl-AMP and the transfer of the activated lipoyl onto the lipoyl domains of lipoate-dependent enzymes. The sequence is that of Putative lipoate-protein ligase A (AIM22) from Saccharomyces cerevisiae (strain ATCC 204508 / S288c) (Baker's yeast).